We begin with the raw amino-acid sequence, 112 residues long: Mitochondrial import inner membrane translocase subunit TIM14-1 (112 aa).

Alanine 2 carries the post-translational modification N-acetylalanine. Residues 7–23 (AGVAVAATALAGRYGIQ) form a helical membrane-spanning segment. In terms of domain architecture, J spans 53–112 (EAALILGVRESVAAEKVKEAHRKVMVANHPDAGGSHFLASKINEAKDVMLGKTKNSGSAF).

It belongs to the TIM14 family. Probable component of the PAM complex at least composed of a mitochondrial HSP70 protein, TIMM44 and TIMM14. The complex interacts with the TIMM23 component of the TIM17:23 complex.

It localises to the mitochondrion. It is found in the mitochondrion inner membrane. Component of the PAM complex, a complex required for the translocation of transit peptide-containing proteins from the inner membrane into the mitochondrial matrix in an ATP-dependent manner. The protein is Mitochondrial import inner membrane translocase subunit TIM14-1 (TIM14-1) of Arabidopsis thaliana (Mouse-ear cress).